Reading from the N-terminus, the 393-residue chain is Zinc finger CCCH domain-containing protein 2 (393 aa).

Positions 1–71 (MDVVCTEHQM…NRENKEYCYD (71 aa)) are disordered. Residues 20-37 (RKLLLSSKSFPSDSSSPR) are compositionally biased toward low complexity. The segment covering 60–69 (DNNRENKEYC) has biased composition (basic and acidic residues). 2 consecutive C3H1-type zinc fingers follow at residues 122–150 (QYSGEVCPEFRRGGDCSRGDDCEFAHGVF) and 159–181 (YRTEACKDGKHCKRKVCFFAHSP).

As to quaternary structure, interacts with MARD1/FLZ9 and RD21A. As to expression, specifically expressed in seeds.

The protein localises to the nucleus. In terms of biological role, probable transcription repressor that functions as a negative regulator of phytochrome-mediated promotion of seed germination. Inhibits seed germination by regulating the expression of gibberellic acid (GA) and abscisic acid (ABA) metabolic genes. Does not regulate the expression of the DELLA genes RGA and RGA1. Activated by PIL5, a phytochrome-interacting basic helix-loop-helix transcription factor. Represses directly JMJ20 and JMJ22 expression in the absence of red light (R) and in far-red (FR) conditions. The polypeptide is Zinc finger CCCH domain-containing protein 2 (Arabidopsis thaliana (Mouse-ear cress)).